Reading from the N-terminus, the 489-residue chain is Protein-export membrane protein SecD (489 aa).

6 helical membrane passes run Val17–Ala37, Phe328–Val348, Ser356–Ala376, Leu384–Ile404, Leu428–Met448, and Leu450–Phe470.

The protein belongs to the SecD/SecF family. SecD subfamily. In terms of assembly, part of the protein translocation apparatus. Forms a complex with SecF.

Its subcellular location is the cell membrane. In terms of biological role, involved in protein export. The protein is Protein-export membrane protein SecD of Methanolacinia petrolearia (strain DSM 11571 / OCM 486 / SEBR 4847) (Methanoplanus petrolearius).